Consider the following 88-residue polypeptide: NADH-ubiquinone oxidoreductase chain 4L (88 aa).

The next 2 membrane-spanning stretches (helical) occupy residues 22-42 (IILM…LVLV) and 57-77 (IYII…LVAY).

It belongs to the complex I subunit 4L family.

Its subcellular location is the mitochondrion membrane. The catalysed reaction is a ubiquinone + NADH + 5 H(+)(in) = a ubiquinol + NAD(+) + 4 H(+)(out). Functionally, core subunit of the mitochondrial membrane respiratory chain NADH dehydrogenase (Complex I) that is believed to belong to the minimal assembly required for catalysis. Complex I functions in the transfer of electrons from NADH to the respiratory chain. The immediate electron acceptor for the enzyme is believed to be ubiquinone. In Trimorphomyces papilionaceus (Jelly fungus), this protein is NADH-ubiquinone oxidoreductase chain 4L (ND4L).